A 375-amino-acid chain; its full sequence is Isopentenyl-diphosphate delta-isomerase (375 aa).

8 to 9 provides a ligand contact to substrate; it reads RK. Residues Thr65, 66–68, Ser96, and Asn125 contribute to the FMN site; that span reads GMT. Substrate is bound at residue 96–98; sequence SQR. Gln160 is a substrate binding site. Glu161 contributes to the Mg(2+) binding site. FMN-binding positions include Lys192, Thr222, 273 to 275, and 294 to 295; these read GVR and AL.

The protein belongs to the IPP isomerase type 2 family. Homooctamer. Dimer of tetramers. Requires FMN as cofactor. It depends on NADPH as a cofactor. Mg(2+) serves as cofactor.

The protein localises to the cytoplasm. The catalysed reaction is isopentenyl diphosphate = dimethylallyl diphosphate. In terms of biological role, involved in the biosynthesis of isoprenoids. Catalyzes the 1,3-allylic rearrangement of the homoallylic substrate isopentenyl (IPP) to its allylic isomer, dimethylallyl diphosphate (DMAPP). This is Isopentenyl-diphosphate delta-isomerase from Aeropyrum pernix (strain ATCC 700893 / DSM 11879 / JCM 9820 / NBRC 100138 / K1).